Here is a 398-residue protein sequence, read N- to C-terminus: Bifunctional enzyme IspD/IspF (398 aa).

The segment at 1–234 is 2-C-methyl-D-erythritol 4-phosphate cytidylyltransferase; that stretch reads MSNSKRTAAI…SRLGALLGDI (234 aa). Residues 235-398 form a 2-C-methyl-D-erythritol 2,4-cyclodiphosphate synthase region; the sequence is RTGTGYDVHA…LPWGTNGLAD (164 aa). A divalent metal cation contacts are provided by aspartate 241 and histidine 243. Residues 241–243 and 267–268 contribute to the 4-CDP-2-C-methyl-D-erythritol 2-phosphate site; these read DVH and HS. Histidine 275 serves as a coordination point for a divalent metal cation. 4-CDP-2-C-methyl-D-erythritol 2-phosphate is bound by residues 289–291, 365–368, phenylalanine 372, and arginine 375; these read DIG and TTSE.

In the N-terminal section; belongs to the IspD/TarI cytidylyltransferase family. IspD subfamily. The protein in the C-terminal section; belongs to the IspF family. It depends on a divalent metal cation as a cofactor.

The catalysed reaction is 2-C-methyl-D-erythritol 4-phosphate + CTP + H(+) = 4-CDP-2-C-methyl-D-erythritol + diphosphate. The enzyme catalyses 4-CDP-2-C-methyl-D-erythritol 2-phosphate = 2-C-methyl-D-erythritol 2,4-cyclic diphosphate + CMP. It functions in the pathway isoprenoid biosynthesis; isopentenyl diphosphate biosynthesis via DXP pathway; isopentenyl diphosphate from 1-deoxy-D-xylulose 5-phosphate: step 2/6. Its pathway is isoprenoid biosynthesis; isopentenyl diphosphate biosynthesis via DXP pathway; isopentenyl diphosphate from 1-deoxy-D-xylulose 5-phosphate: step 4/6. Bifunctional enzyme that catalyzes the formation of 4-diphosphocytidyl-2-C-methyl-D-erythritol from CTP and 2-C-methyl-D-erythritol 4-phosphate (MEP) (IspD), and catalyzes the conversion of 4-diphosphocytidyl-2-C-methyl-D-erythritol 2-phosphate (CDP-ME2P) to 2-C-methyl-D-erythritol 2,4-cyclodiphosphate (ME-CPP) with a corresponding release of cytidine 5-monophosphate (CMP) (IspF). This chain is Bifunctional enzyme IspD/IspF, found in Rhodopseudomonas palustris (strain BisB18).